The sequence spans 425 residues: Trigger factor (425 aa).

The region spanning 158–231 (GDLVRISMEV…VQEVYRRTLP (74 aa)) is the PPIase FKBP-type domain.

The protein belongs to the FKBP-type PPIase family. Tig subfamily.

The protein localises to the cytoplasm. The enzyme catalyses [protein]-peptidylproline (omega=180) = [protein]-peptidylproline (omega=0). Its function is as follows. Involved in protein export. Acts as a chaperone by maintaining the newly synthesized protein in an open conformation. Functions as a peptidyl-prolyl cis-trans isomerase. This chain is Trigger factor, found in Thermotoga neapolitana (strain ATCC 49049 / DSM 4359 / NBRC 107923 / NS-E).